The primary structure comprises 198 residues: V-type ATP synthase subunit E (198 aa).

It belongs to the V-ATPase E subunit family.

Its function is as follows. Produces ATP from ADP in the presence of a proton gradient across the membrane. The sequence is that of V-type ATP synthase subunit E from Clostridium perfringens (strain SM101 / Type A).